A 228-amino-acid chain; its full sequence is L-ribulose-5-phosphate 4-epimerase UlaF (228 aa).

Substrate-binding positions include 26-27 (GN), 43-44 (SG), and 72-73 (SS). Positions 74, 93, and 95 each coordinate Zn(2+). Residue D118 is the Proton donor/acceptor of the active site. H167 lines the Zn(2+) pocket. Residue Y225 is the Proton donor/acceptor of the active site.

The protein belongs to the aldolase class II family. AraD/FucA subfamily. The cofactor is Zn(2+).

The catalysed reaction is L-ribulose 5-phosphate = D-xylulose 5-phosphate. It participates in cofactor degradation; L-ascorbate degradation; D-xylulose 5-phosphate from L-ascorbate: step 4/4. In terms of biological role, catalyzes the isomerization of L-ribulose 5-phosphate to D-xylulose 5-phosphate. Is involved in the anaerobic L-ascorbate utilization. In Escherichia coli O17:K52:H18 (strain UMN026 / ExPEC), this protein is L-ribulose-5-phosphate 4-epimerase UlaF.